We begin with the raw amino-acid sequence, 388 residues long: 1-deoxy-D-xylulose 5-phosphate reductoisomerase (388 aa).

Residues T15, G16, S17, I18, and N127 each contribute to the NADPH site. K128 serves as a coordination point for 1-deoxy-D-xylulose 5-phosphate. Residue E129 coordinates NADPH. D153 contacts Mn(2+). 1-deoxy-D-xylulose 5-phosphate-binding residues include S154, E155, S179, and H202. E155 contacts Mn(2+). Position 208 (G208) interacts with NADPH. S215, N220, K221, and E224 together coordinate 1-deoxy-D-xylulose 5-phosphate. E224 is a Mn(2+) binding site.

This sequence belongs to the DXR family. The cofactor is Mg(2+). Mn(2+) serves as cofactor.

The catalysed reaction is 2-C-methyl-D-erythritol 4-phosphate + NADP(+) = 1-deoxy-D-xylulose 5-phosphate + NADPH + H(+). Its pathway is isoprenoid biosynthesis; isopentenyl diphosphate biosynthesis via DXP pathway; isopentenyl diphosphate from 1-deoxy-D-xylulose 5-phosphate: step 1/6. In terms of biological role, catalyzes the NADPH-dependent rearrangement and reduction of 1-deoxy-D-xylulose-5-phosphate (DXP) to 2-C-methyl-D-erythritol 4-phosphate (MEP). The polypeptide is 1-deoxy-D-xylulose 5-phosphate reductoisomerase (Bacteroides fragilis (strain ATCC 25285 / DSM 2151 / CCUG 4856 / JCM 11019 / LMG 10263 / NCTC 9343 / Onslow / VPI 2553 / EN-2)).